A 61-amino-acid polypeptide reads, in one-letter code: Ferredoxin-2 (61 aa).

4Fe-4S ferredoxin-type domains are found at residues 2–27 (HRITEECTYCAACEPECPVNAISAGD) and 28–61 (EIYIVDESVCTDCEGYYDEPACVAVCPVDCIIKV). Cysteine 8, cysteine 11, cysteine 14, cysteine 18, cysteine 37, cysteine 40, cysteine 49, and cysteine 53 together coordinate [4Fe-4S] cluster.

[4Fe-4S] cluster serves as cofactor.

Functionally, ferredoxins are iron-sulfur proteins that transfer electrons in a wide variety of metabolic reactions. The protein is Ferredoxin-2 of Chlorobium limicola.